A 450-amino-acid polypeptide reads, in one-letter code: 23S rRNA (uracil(1939)-C(5))-methyltransferase RlmD (450 aa).

One can recognise a TRAM domain in the interval 12-70 (SKQLSAKLSLSVNQLDHLGAGIAQHQGKVVFIPGALPDETVTVQLTEQKKNYARAKLIK). [4Fe-4S] cluster-binding residues include C83, C89, C92, and C171. Residues Q283, F312, N317, E333, D360, and D380 each contribute to the S-adenosyl-L-methionine site. C406 functions as the Nucleophile in the catalytic mechanism.

Belongs to the class I-like SAM-binding methyltransferase superfamily. RNA M5U methyltransferase family. RlmD subfamily.

The enzyme catalyses uridine(1939) in 23S rRNA + S-adenosyl-L-methionine = 5-methyluridine(1939) in 23S rRNA + S-adenosyl-L-homocysteine + H(+). Its function is as follows. Catalyzes the formation of 5-methyl-uridine at position 1939 (m5U1939) in 23S rRNA. The chain is 23S rRNA (uracil(1939)-C(5))-methyltransferase RlmD from Shewanella baltica (strain OS223).